Reading from the N-terminus, the 346-residue chain is D-erythrose-4-phosphate dehydrogenase (346 aa).

11 to 12 (RI) lines the NAD(+) pocket. Substrate contacts are provided by residues 163-165 (SCT), arginine 209, 222-223 (TK), and arginine 245. Catalysis depends on cysteine 164, which acts as the Nucleophile. Asparagine 327 contacts NAD(+).

Belongs to the glyceraldehyde-3-phosphate dehydrogenase family. Epd subfamily. Homotetramer.

It is found in the cytoplasm. It catalyses the reaction D-erythrose 4-phosphate + NAD(+) + H2O = 4-phospho-D-erythronate + NADH + 2 H(+). Its pathway is cofactor biosynthesis; pyridoxine 5'-phosphate biosynthesis; pyridoxine 5'-phosphate from D-erythrose 4-phosphate: step 1/5. Catalyzes the NAD-dependent conversion of D-erythrose 4-phosphate to 4-phosphoerythronate. This Vibrio vulnificus (strain CMCP6) protein is D-erythrose-4-phosphate dehydrogenase.